A 525-amino-acid chain; its full sequence is Delta(24)-sterol reductase homolog dhcr-24 (525 aa).

The next 2 membrane-spanning stretches (helical) occupy residues 27 to 47 (WVFVVPFLLPLSFLFNTVFDF) and 214 to 234 (SLFFAIPWSQGTICFLVAATI). The FAD-binding PCMH-type domain maps to 47 to 239 (FRNRIVHAVN…VAATIKIIPC (193 aa)).

It belongs to the FAD-binding oxidoreductase/transferase type 4 family. Requires FAD as cofactor.

Its subcellular location is the endoplasmic reticulum membrane. It localises to the golgi apparatus membrane. It carries out the reaction cholesterol + NADP(+) = desmosterol + NADPH + H(+). The enzyme catalyses lanosterol + NADPH + H(+) = 24,25-dihydrolanosterol + NADP(+). It catalyses the reaction 5alpha-cholest-8-en-3beta-ol + NADP(+) = zymosterol + NADPH + H(+). The protein operates within steroid biosynthesis; cholesterol biosynthesis. Catalyzes the reduction of the delta-24 double bond of sterol intermediates during cholesterol biosynthesis. The chain is Delta(24)-sterol reductase homolog dhcr-24 from Caenorhabditis elegans.